We begin with the raw amino-acid sequence, 615 residues long: Envelope glycoprotein (615 aa).

Positions 1-84 (MPKRRAGFRK…VQNGAAAAFW (84 aa)) are cleaved as a signal peptide. At 85-378 (AYIPDPPMIQ…INTALSRPKR (294 aa)) the chain is on the extracellular side. Asn-108, Asn-127, Asn-178, Asn-219, Asn-275, and Asn-319 each carry an N-linked (GlcNAc...) asparagine; by host glycan. The chain crosses the membrane as a helical span at residues 379-402 (GLSLIILGIVSLITLIATAVTACV). At 403–615 (SLAQSIQAAH…KERGAAGDDP (213 aa)) the chain is on the cytoplasmic side. 2 coiled-coil regions span residues 411 to 461 (AHTV…FRMK) and 495 to 531 (IWFNTNLSLDLLQLHNEILDIENSPKATLNIADTVDN). Residues 590–593 (YRTM) form a required for cell transformation region.

Interacts with sheep HYAL2 receptor.

Its subcellular location is the virion membrane. Its function is as follows. The envelope proteins induce cell transformation leading to ovine pulmonary adenocarcinoma (OPA), a contagious lung cancer of sheep and goat. They bind to the HYAL2 receptor for cell entry. Env proteins probably do not act as oncogenes by themselves, but may rather liberate an oncogenic factor that would normally be negatively regulated. One mechanism of transformation seems to involve activation of the phosphoinositide-3-OH kinase (PI3K)/Akt pathway but does not involve the virus receptor HYAL2, and the other seems to involve Env binding to HYAL2, HYAL2 degradation, and activation of the MST1R receptor tyrosine kinase, which is normally suppressed by HYAL2. The protein is Envelope glycoprotein (env) of Ovis aries (Sheep).